A 630-amino-acid polypeptide reads, in one-letter code: A-type voltage-gated potassium channel KCND2 (630 aa).

Topologically, residues 1-184 (MAAGVAAWLP…FENPHTSTMA (184 aa)) are cytoplasmic. Residues 2-20 (AAGVAAWLPFARAAAIGWM) are interaction with KCNIP1, KCNIP2, and other family members. Phosphothreonine is present on threonine 38. The interval 71-90 (ERDFFYHPETQQYFFDRDPD) is interaction with KCNIP1. Histidine 105, cysteine 111, cysteine 132, and cysteine 133 together coordinate Zn(2+). Residues 185–206 (LVFYYVTGFFIAVSVIANVVET) form a helical membrane-spanning segment. At 207–226 (VPCGSSPGHIKELPCGERYA) the chain is on the extracellular side. A helical transmembrane segment spans residues 227–249 (VAFFCLDTACVMIFTVEYLLRLA). The Cytoplasmic segment spans residues 250-256 (AAPSRYR). The helical transmembrane segment at 257-281 (FVRSVMSIIDVVAILPYYIGLVMTD) threads the bilayer. Topologically, residues 282–287 (NEDVSG) are extracellular. Residues 288–307 (AFVTLRVFRVFRIFKFSRHS) form a helical; Voltage-sensor membrane-spanning segment. Residues 308–321 (QGLRILGYTLKSCA) lie on the Cytoplasmic side of the membrane. The S4-S5 linker stretch occupies residues 308–321 (QGLRILGYTLKSCA). The chain crosses the membrane as a helical span at residues 322–345 (SELGFLLFSLTMAIIIFATVMFYA). Residues 346 to 357 (EKGSSASKFTSI) are Extracellular-facing. The helical intramembrane region spans 358 to 369 (PAAFWYTIVTMT). Threonine 370, leucine 371, glycine 372, and tyrosine 373 together coordinate K(+). The Selectivity filter signature appears at 370–375 (TLGYGD). Residues 370 to 377 (TLGYGDMV) lie within the membrane without spanning it. The Extracellular portion of the chain corresponds to 378 to 380 (PKT). Residues 381–403 (IAGKIFGSICSLSGVLVIALPVP) traverse the membrane as a helical segment. The Cytoplasmic portion of the chain corresponds to 404 to 630 (VIVSNFSRIY…GGNIVRVSAL (227 aa)). Serine 438 is modified (phosphoserine). Residues 474–489 (FETQHHHLLHCLEKTT) form a required for dendritic targeting region. An important for normal channel activation and inactivation, for interaction with KCNIP2, and probably other family members as well region spans residues 474–630 (FETQHHHLLH…GGNIVRVSAL (157 aa)). Phosphoserine occurs at positions 548, 552, 572, and 575. The tract at residues 600–623 (IPTPPVTTPEGDDRPESPEYSGGN) is disordered. Residues threonine 602 and threonine 607 each carry the phosphothreonine modification. Serine 616 carries the post-translational modification Phosphoserine. The PDZ-binding motif lies at 627 to 630 (VSAL).

It belongs to the potassium channel family. D (Shal) (TC 1.A.1.2) subfamily. Kv4.2/KCND2 sub-subfamily. As to quaternary structure, homotetramer or heterotetramer with KCND1 or KCND3. Associates with the regulatory subunits KCNIP1, KCNIP2, KCNIP3 and KCNIP4. Interacts with DPP6, DPP10, DLG4 and DLG1. In vivo, probably exists as heteromeric complex containing variable proportions of KCND1, KCND2, KCND3, KCNIP1, KCNIP2, KCNIP3, KCNIP4, DPP6 and DPP10. The tetrameric channel can associate with up to four regulatory subunits, such as KCNIP2 or KCNIP4. Interaction with KCNIP3 promotes tetramerization and formation of a functional potassium channel. Interaction with four KCNIP4 chains does not reduce interaction with DPP10. Probably part of a complex consisting of KCNIP1, KCNIP2 isoform 3 and KCND2. Interacts with FLNA and FLNC. Interacts with NCS1/FREQ. Identified in a complex with cAMP-dependent protein kinase (PKA), CAV3, AKAP6 and KCND3 in cardiac myocytes. Interacts (via S1 and S2 helices) with DPP6; this interaction stabilizes the conformation of the S1-S2 helices and facilitates S4 conformational change, including S4 sliding up and down, thereby accelerating activation, inactivation, and recovery. Post-translationally, phosphorylation at Ser-438 in response to MAPK activation is increased in stimulated dendrites. Interaction with KCNIP2 and DPP6 propomtes phosphorylation by PKA at Ser-552. Phosphorylation at Ser-552 has no effect on interaction with KCNIP3, but is required for the regulation of channel activity by KCNIP3. Phosphorylation at Ser-552 leads to KCND2 internalization. Phosphorylated by MAPK in response to signaling via the metabotropic glutamate receptor GRM5. Phosphorylation at Ser-616 is required for the down-regulation of neuronal A-type currents in response to signaling via GRM5. Detected in brain frontal cortex.

The protein localises to the cell membrane. It is found in the cell projection. It localises to the dendrite. The protein resides in the synapse. Its subcellular location is the perikaryon. The protein localises to the postsynaptic cell membrane. It is found in the dendritic spine. It localises to the sarcolemma. The protein resides in the cell junction. Its subcellular location is the membrane. The protein localises to the caveola. It carries out the reaction K(+)(in) = K(+)(out). Voltage-gated potassium channel that mediates transmembrane potassium transport in excitable membranes, primarily in the brain. Mediates the major part of the dendritic A-type current I(SA) in brain neurons. This current is activated at membrane potentials that are below the threshold for action potentials. It regulates neuronal excitability, prolongs the latency before the first spike in a series of action potentials, regulates the frequency of repetitive action potential firing, shortens the duration of action potentials and regulates the back-propagation of action potentials from the neuronal cell body to the dendrites. Contributes to the regulation of the circadian rhythm of action potential firing in suprachiasmatic nucleus neurons, which regulates the circadian rhythm of locomotor activity. Functions downstream of the metabotropic glutamate receptor GRM5 and plays a role in neuronal excitability and in nociception mediated by activation of GRM5. Mediates the transient outward current I(to) in rodent heart left ventricle apex cells, but not in human heart, where this current is mediated by another family member. Forms tetrameric potassium-selective channels through which potassium ions pass in accordance with their electrochemical gradient. The channel alternates between opened and closed conformations in response to the voltage difference across the membrane. Can form functional homotetrameric channels and heterotetrameric channels that contain variable proportions of KCND2 and KCND3; channel properties depend on the type of pore-forming alpha subunits that are part of the channel. In vivo, membranes probably contain a mixture of heteromeric potassium channel complexes. Interaction with specific isoforms of the regulatory subunits KCNIP1, KCNIP2, KCNIP3 or KCNIP4 strongly increases expression at the cell surface and thereby increases channel activity; it modulates the kinetics of channel activation and inactivation, shifts the threshold for channel activation to more negative voltage values, shifts the threshold for inactivation to less negative voltages and accelerates recovery after inactivation. Likewise, interaction with DPP6 or DPP10 promotes expression at the cell membrane and regulates both channel characteristics and activity. Upon depolarization, the channel goes from a resting closed state (C state) to an activated but non-conducting state (C* state), from there, the channel may either inactivate (I state) or open (O state). This chain is A-type voltage-gated potassium channel KCND2, found in Oryctolagus cuniculus (Rabbit).